The primary structure comprises 151 residues: Small ribosomal subunit protein uS19 (151 aa).

Positions 1-23 are disordered; that stretch reads MVVNKQGSVKSIKRKARKSRKVT. Residues 11 to 23 are compositionally biased toward basic residues; sequence SIKRKARKSRKVT.

It belongs to the universal ribosomal protein uS19 family.

Its function is as follows. Protein S19 forms a complex with S13 that binds strongly to the 16S ribosomal RNA. This is Small ribosomal subunit protein uS19 (rps19) from Thermoplasma volcanium (strain ATCC 51530 / DSM 4299 / JCM 9571 / NBRC 15438 / GSS1).